A 632-amino-acid polypeptide reads, in one-letter code: SH2B adapter protein 2 (632 aa).

At Y52 the chain carries Phosphotyrosine. S141 is modified (phosphoserine). A PH domain is found at 193–306 (DIQREGALRF…WVADIQGCVD (114 aa)). S310 is modified (phosphoserine). The segment at 381–409 (TLESPGGSGSDSNNTGEQGAETDPEAEPE) is disordered. The span at 400–409 (AETDPEAEPE) shows a compositional bias: acidic residues. An SH2 domain is found at 417 to 515 (WFHGTLSRVK…SADITLRSYV (99 aa)). Disordered stretches follow at residues 516 to 537 (RAQD…SPAC) and 558 to 632 (ASPS…YSFY). Residues 519 to 532 (DPPPEPGPTPPAAP) show a composition bias toward pro residues. Low complexity-rich tracts occupy residues 558 to 579 (ASPS…AASG) and 604 to 626 (EAVA…RAVE). At Y629 the chain carries Phosphotyrosine.

This sequence belongs to the SH2B adapter family. In terms of assembly, homodimer. Interacts with KIT/c-KIT, SHC1, EPOR, PDGFR, VAV1 and VAV3. Interacts (via N-terminal region) with SHC1. Interacts (via the phosphorylated C-terminus) with GRB2. Interacts (via its SH2 domain) with EPOR, INSR and KIT. Interacts with GRB2 after B-cell antigen receptor stimulation. Interacts (via PH domain) with VAV3. Interacts with NTRK1, NTRK2 and NTRK3 (phosphorylated); after stimulation of the receptor by its extracellular ligand and subsequent autophosphorylation of the receptor. Binds INSR, GRB2, ASB6 and CAP. Insulin stimulation leads to dissociation of CAP. Binds CBS only when SH2B2/APS has become phosphorylated. INSR binding does not depend on the phosphorylation of SH2B2/APS. Tyrosine phosphorylated by JAK2, KIT and other kinases activated by B-cell receptor in response to stimulation with cytokines, IL3, IL5, PDGF, IGF1, IGF2, CSF2/GM-CSF and cross-linking of the B-cell receptor complex. Expressed in spleen, prostate, testis, uterus, small intestine and skeletal muscle. Among hematopoietic cell lines, expressed exclusively in B-cells. Not expressed in most tumor cell lines.

It is found in the cytoplasm. The protein localises to the cell membrane. Adapter protein for several members of the tyrosine kinase receptor family. Involved in multiple signaling pathways. May be involved in coupling from immunoreceptor to Ras signaling. Acts as a negative regulator of cytokine signaling in collaboration with CBL. Binds to EPOR and suppresses EPO-induced STAT5 activation, possibly through a masking effect on STAT5 docking sites in EPOR. Suppresses PDGF-induced mitogenesis. May induce cytoskeletal reorganization via interaction with VAV3. In Homo sapiens (Human), this protein is SH2B adapter protein 2 (SH2B2).